A 298-amino-acid polypeptide reads, in one-letter code: uncharacterized protein (298 aa).

A run of 8 helical transmembrane segments spans residues 5-25 (SLATLFALLILATLINRFLLW), 52-72 (VISGPRWMTLTFFALISFLAL), 105-125 (LFLLFIPLAGFLILATGQVLV), 138-158 (IFWGWIMTVFALSHAAWLLML), 163-183 (IQGGALLVLFLLALTESNDIA), 208-228 (GLMGGVITIMIASLIIGPLLT), 236-256 (LLAGLLIGISGFCGDVVMSAI), and 273-293 (GGLLDRIDSLIFTAPVFFYFI).

The protein belongs to the CDS family.

It localises to the cell membrane. This is an uncharacterized protein from Escherichia coli (strain K12).